A 405-amino-acid polypeptide reads, in one-letter code: S-adenosylmethionine synthase (405 aa).

139–144 (GQGSVD) contributes to the ATP binding site.

This sequence belongs to the AdoMet synthase 2 family. Requires Mg(2+) as cofactor.

The enzyme catalyses L-methionine + ATP + H2O = S-adenosyl-L-methionine + phosphate + diphosphate. It functions in the pathway amino-acid biosynthesis; S-adenosyl-L-methionine biosynthesis; S-adenosyl-L-methionine from L-methionine: step 1/1. In terms of biological role, catalyzes the formation of S-adenosylmethionine from methionine and ATP. The protein is S-adenosylmethionine synthase of Thermococcus onnurineus (strain NA1).